The sequence spans 699 residues: Polyribonucleotide nucleotidyltransferase (699 aa).

The Mg(2+) site is built by Asp485 and Asp491. Positions Pro552–Ile611 constitute a KH domain. One can recognise an S1 motif domain in the interval Gly621–Lys689.

Belongs to the polyribonucleotide nucleotidyltransferase family. In terms of assembly, component of the RNA degradosome, which is a multiprotein complex involved in RNA processing and mRNA degradation. It depends on Mg(2+) as a cofactor.

The protein localises to the cytoplasm. The catalysed reaction is RNA(n+1) + phosphate = RNA(n) + a ribonucleoside 5'-diphosphate. Its function is as follows. Involved in mRNA degradation. Catalyzes the phosphorolysis of single-stranded polyribonucleotides processively in the 3'- to 5'-direction. The chain is Polyribonucleotide nucleotidyltransferase from Shewanella sp. (strain MR-4).